Here is a 126-residue protein sequence, read N- to C-terminus: uncharacterized protein (126 aa).

The Cytoplasmic segment spans residues 1-28; that stretch reads MAGEAVSEHTPDSQEVTVTSVVCCLDSV. The chain crosses the membrane as a helical span at residues 29–49; that stretch reads VEIGHHVVYSVVTPLIVAVLI. Over 50 to 75 the chain is Extracellular; that stretch reads DTMAGEAVLEHTSDSQEEIVTTVVCS. Residues 76–96 form a helical membrane-spanning segment; sequence VVPLVCFVVSVVCFVISVVEI. A topological domain (cytoplasmic) is located at residue Gly-97. Residues 98–118 form a helical membrane-spanning segment; that stretch reads HHVVYSVVAPLTVTVAVETIA. The Extracellular portion of the chain corresponds to 119–126; it reads EEMDSVHT.

It localises to the membrane. This is an uncharacterized protein from Saccharomyces cerevisiae (strain ATCC 204508 / S288c) (Baker's yeast).